The sequence spans 421 residues: Glutamyl-tRNA reductase (421 aa).

Substrate contacts are provided by residues 49-52 (TCNR), Ser-109, 114-116 (EAQ), and Gln-120. Cys-50 (nucleophile) is an active-site residue. An NADP(+)-binding site is contributed by 189–194 (GAGEMC).

Belongs to the glutamyl-tRNA reductase family. In terms of assembly, homodimer.

The enzyme catalyses (S)-4-amino-5-oxopentanoate + tRNA(Glu) + NADP(+) = L-glutamyl-tRNA(Glu) + NADPH + H(+). The protein operates within porphyrin-containing compound metabolism; protoporphyrin-IX biosynthesis; 5-aminolevulinate from L-glutamyl-tRNA(Glu): step 1/2. Its function is as follows. Catalyzes the NADPH-dependent reduction of glutamyl-tRNA(Glu) to glutamate 1-semialdehyde (GSA). This chain is Glutamyl-tRNA reductase, found in Magnetococcus marinus (strain ATCC BAA-1437 / JCM 17883 / MC-1).